The primary structure comprises 95 residues: UPF0473 protein GWCH70_2487 (95 aa).

The protein belongs to the UPF0473 family.

This chain is UPF0473 protein GWCH70_2487, found in Geobacillus sp. (strain WCH70).